The sequence spans 1235 residues: Major DNA-binding protein (1235 aa).

A disordered region spans residues 536–584 (GGLDGKGDDGVPGGGAGGGGGRDVSGGPSDGLGGGRGGGGGGDSGGMMG). Positions 545–584 (GVPGGGAGGGGGRDVSGGPSDGLGGGRGGGGGGDSGGMMG) are enriched in gly residues. A Required for filament formation motif is present at residues 846 to 847 (FW). Residues 1214–1226 (GVGGSSGGGGGSG) are compositionally biased toward gly residues. Residues 1214–1235 (GVGGSSGGGGGSGLLPAKRSRL) form a disordered region. Residues 1232–1235 (RSRL) form a required for nuclear localization region.

This sequence belongs to the herpesviridae major DNA-binding protein family. As to quaternary structure, homooligomers. Forms double-helical filaments necessary for the formation of replication compartments within the host nucleus. Interacts with the origin-binding protein. Interacts with the helicase primase complex; this interaction stimulates primer synthesis activity of the helicase-primase complex. Interacts with the DNA polymerase. Interacts with the alkaline exonuclease; this interaction increases its nuclease processivity.

It localises to the host nucleus. Its function is as follows. Plays several crucial roles in viral infection. Participates in the opening of the viral DNA origin to initiate replication by interacting with the origin-binding protein. May disrupt loops, hairpins and other secondary structures present on ssDNA to reduce and eliminate pausing of viral DNA polymerase at specific sites during elongation. Promotes viral DNA recombination by performing strand-transfer, characterized by the ability to transfer a DNA strand from a linear duplex to a complementary single-stranded DNA circle. Can also catalyze the renaturation of complementary single strands. Additionally, reorganizes the host cell nucleus, leading to the formation of prereplicative sites and replication compartments. This process is driven by the protein which can form double-helical filaments in the absence of DNA. This Homo sapiens (Human) protein is Major DNA-binding protein.